Reading from the N-terminus, the 415-residue chain is Gamma-glutamyl phosphate reductase (415 aa).

Belongs to the gamma-glutamyl phosphate reductase family.

The protein resides in the cytoplasm. It catalyses the reaction L-glutamate 5-semialdehyde + phosphate + NADP(+) = L-glutamyl 5-phosphate + NADPH + H(+). The protein operates within amino-acid biosynthesis; L-proline biosynthesis; L-glutamate 5-semialdehyde from L-glutamate: step 2/2. Catalyzes the NADPH-dependent reduction of L-glutamate 5-phosphate into L-glutamate 5-semialdehyde and phosphate. The product spontaneously undergoes cyclization to form 1-pyrroline-5-carboxylate. In Bacillus cereus (strain ATCC 10987 / NRS 248), this protein is Gamma-glutamyl phosphate reductase.